The sequence spans 175 residues: Protein FAM89A (175 aa).

The disordered stretch occupies residues 141–175; sequence FQEQGSLQDGQHHGSPRDQSPLTHLSSSDWILESI. Residues 157 to 169 show a composition bias toward polar residues; the sequence is RDQSPLTHLSSSD.

Belongs to the FAM89 family.

In Mus musculus (Mouse), this protein is Protein FAM89A (Fam89a).